Here is a 489-residue protein sequence, read N- to C-terminus: Cobyric acid synthase (489 aa).

The 190-residue stretch at 252 to 441 (ALTIGVIQLP…IHGIFANTEF (190 aa)) folds into the GATase cobBQ-type domain. The active-site Nucleophile is Cys-330. The active site involves His-433.

It belongs to the CobB/CobQ family. CobQ subfamily.

It functions in the pathway cofactor biosynthesis; adenosylcobalamin biosynthesis. Functionally, catalyzes amidations at positions B, D, E, and G on adenosylcobyrinic A,C-diamide. NH(2) groups are provided by glutamine, and one molecule of ATP is hydrogenolyzed for each amidation. The polypeptide is Cobyric acid synthase (Herpetosiphon aurantiacus (strain ATCC 23779 / DSM 785 / 114-95)).